Here is a 972-residue protein sequence, read N- to C-terminus: Glycine dehydrogenase (decarboxylating) (972 aa).

Lys-713 carries the post-translational modification N6-(pyridoxal phosphate)lysine.

Belongs to the GcvP family. As to quaternary structure, the glycine cleavage system is composed of four proteins: P, T, L and H. Pyridoxal 5'-phosphate is required as a cofactor.

It carries out the reaction N(6)-[(R)-lipoyl]-L-lysyl-[glycine-cleavage complex H protein] + glycine + H(+) = N(6)-[(R)-S(8)-aminomethyldihydrolipoyl]-L-lysyl-[glycine-cleavage complex H protein] + CO2. Functionally, the glycine cleavage system catalyzes the degradation of glycine. The P protein binds the alpha-amino group of glycine through its pyridoxal phosphate cofactor; CO(2) is released and the remaining methylamine moiety is then transferred to the lipoamide cofactor of the H protein. This is Glycine dehydrogenase (decarboxylating) from Aromatoleum aromaticum (strain DSM 19018 / LMG 30748 / EbN1) (Azoarcus sp. (strain EbN1)).